The chain runs to 559 residues: Germacrene A synthase 1 (559 aa).

Mg(2+)-binding residues include D312, D316, D456, T460, and E464. A DDXXD motif motif is present at residues D312–D316.

Belongs to the terpene synthase family. Monomer. Mg(2+) serves as cofactor. In terms of tissue distribution, mainly expressed in sunflower trichomes.

The enzyme catalyses (2E,6E)-farnesyl diphosphate = (+)-(R)-germacrene A + diphosphate. Its pathway is secondary metabolite biosynthesis; terpenoid biosynthesis. Sesquiterpene synthase involved in germacrene A biosynthesis. Germacrene A is a precursor of several sesquiterpene lactones. The chain is Germacrene A synthase 1 from Helianthus annuus (Common sunflower).